Consider the following 438-residue polypeptide: ATP-dependent protease ATPase subunit HslU (438 aa).

Residues Val18, 60-65, Asp252, Glu317, and Arg389 each bind ATP; that span reads GVGKTE.

It belongs to the ClpX chaperone family. HslU subfamily. A double ring-shaped homohexamer of HslV is capped on each side by a ring-shaped HslU homohexamer. The assembly of the HslU/HslV complex is dependent on binding of ATP.

The protein resides in the cytoplasm. Its function is as follows. ATPase subunit of a proteasome-like degradation complex; this subunit has chaperone activity. The binding of ATP and its subsequent hydrolysis by HslU are essential for unfolding of protein substrates subsequently hydrolyzed by HslV. HslU recognizes the N-terminal part of its protein substrates and unfolds these before they are guided to HslV for hydrolysis. The protein is ATP-dependent protease ATPase subunit HslU of Saccharophagus degradans (strain 2-40 / ATCC 43961 / DSM 17024).